Here is a 249-residue protein sequence, read N- to C-terminus: Quinate/shikimate dehydrogenase (249 aa).

The substrate site is built by Lys32 and Asp68. Residues 93–96 (AGGA), 116–119 (NRRD), Lys166, 193–196 (CVYN), and Gly216 contribute to the NAD(+) site.

This sequence belongs to the shikimate dehydrogenase family. In terms of assembly, homodimer.

The enzyme catalyses L-quinate + NAD(+) = 3-dehydroquinate + NADH + H(+). The catalysed reaction is L-quinate + NADP(+) = 3-dehydroquinate + NADPH + H(+). It carries out the reaction shikimate + NADP(+) = 3-dehydroshikimate + NADPH + H(+). It catalyses the reaction shikimate + NAD(+) = 3-dehydroshikimate + NADH + H(+). Its pathway is metabolic intermediate biosynthesis; chorismate biosynthesis; chorismate from D-erythrose 4-phosphate and phosphoenolpyruvate: step 4/7. The actual biological function of YdiB remains unclear, nor is it known whether 3-dehydroshikimate or quinate represents the natural substrate. Catalyzes the reversible NAD-dependent reduction of both 3-dehydroshikimate (DHSA) and 3-dehydroquinate to yield shikimate (SA) and quinate, respectively. It can use both NAD or NADP for catalysis, however it has higher catalytic efficiency with NAD. The polypeptide is Quinate/shikimate dehydrogenase (Shigella flexneri serotype 5b (strain 8401)).